Reading from the N-terminus, the 211-residue chain is Ribosomal RNA small subunit methyltransferase G (211 aa).

Residues G78, M83, 129-130 (AE), and R144 each bind S-adenosyl-L-methionine.

The protein belongs to the methyltransferase superfamily. RNA methyltransferase RsmG family.

The protein resides in the cytoplasm. The enzyme catalyses guanosine(527) in 16S rRNA + S-adenosyl-L-methionine = N(7)-methylguanosine(527) in 16S rRNA + S-adenosyl-L-homocysteine. In terms of biological role, specifically methylates the N7 position of guanine in position 527 of 16S rRNA. In Pseudomonas syringae pv. tomato (strain ATCC BAA-871 / DC3000), this protein is Ribosomal RNA small subunit methyltransferase G.